The primary structure comprises 929 residues: Formin-like protein 11 (929 aa).

The signal sequence occupies residues 1–28; that stretch reads MMRHCRREWLLALCLISVQLLIPTGCEG. Residues 153–215 form a disordered region; that stretch reads ESSTTKSIPE…KSVAEKKKDS (63 aa). Positions 171–189 are enriched in polar residues; the sequence is KTSTPKPVNKPTDSVSSPP. Over residues 191 to 215 the composition is skewed to basic and acidic residues; that stretch reads RSYKSAPTEKENPPTKSVAEKKKDS. A helical transmembrane segment spans residues 222–242; that stretch reads FIGLSIAGIALMAHLCLCCFM. Disordered stretches follow at residues 372–472 and 726–749; these read PVGS…ENSN and AAKEQNSGVSSVKTDDLGDKSEQT. Residues 382–447 show a composition bias toward pro residues; sequence MQPPVMPPPI…GPPRPPPPAM (66 aa). An FH2 domain is found at 468-898; that stretch reads VENSNEAKTK…KAKAKQPSQS (431 aa). Basic and acidic residues predominate over residues 738-749; the sequence is KTDDLGDKSEQT.

The protein belongs to the formin-like family. Class-I subfamily.

The protein localises to the membrane. In Oryza sativa subsp. japonica (Rice), this protein is Formin-like protein 11 (FH11).